A 346-amino-acid chain; its full sequence is MIKVGIIGSTGYAGQELVRILLQHKEVSIVWYGSKSYIDKKYSEVFQNMFQIVEESCFDDNMEELARHVDVIFTATPQGFCASVMTEDILSKVKVIDLSADYRIKDVKTYEEWYGIKHNSPDFLKEAVYGLCEFNREDIKKARLIANPGCYPTCSILSIYPLIKEGIIETDSIIIDAKSGVSGAGRGAKVDNLYCEVNENMKAYGVSTHRHTPEIEEQFSLITLENVTINFTPHLVPMNRGILITAYGKLKKRVSYEEVKEIYDRYYEKEYFVRVLEKGMPPETRWVEGSNFVDVNFVIDNRTNRIIMMGAMDNLVKGAAGQAVQNMNLMFGLPEQEGLKLVPMFP.

Residue Cys150 is part of the active site.

It belongs to the NAGSA dehydrogenase family. Type 1 subfamily.

Its subcellular location is the cytoplasm. The enzyme catalyses N-acetyl-L-glutamate 5-semialdehyde + phosphate + NADP(+) = N-acetyl-L-glutamyl 5-phosphate + NADPH + H(+). It participates in amino-acid biosynthesis; L-arginine biosynthesis; N(2)-acetyl-L-ornithine from L-glutamate: step 3/4. Catalyzes the NADPH-dependent reduction of N-acetyl-5-glutamyl phosphate to yield N-acetyl-L-glutamate 5-semialdehyde. This is N-acetyl-gamma-glutamyl-phosphate reductase from Lachnoclostridium phytofermentans (strain ATCC 700394 / DSM 18823 / ISDg) (Clostridium phytofermentans).